We begin with the raw amino-acid sequence, 180 residues long: MKCPRCSKQEIRVLESRSAEGGQSVRRRRECMSCGYRFTTYERIEFMPIMVIKRDGSRESFNRNKILQGVMRACQKTPVTVRQMEELVNEIEEKLQLEDAQEVTSLRIGEMVLERLQHLSEVAYVRFASVYRQFQGIKDFVNELEQLEPPLRRDLERLLQDSSASDSESSGSPDLVGEYS.

A zinc finger spans residues 3-34 (CPRCSKQEIRVLESRSAEGGQSVRRRRECMSC). One can recognise an ATP-cone domain in the interval 49-139 (IMVIKRDGSR…VYRQFQGIKD (91 aa)). The segment at 155–180 (LERLLQDSSASDSESSGSPDLVGEYS) is disordered. Low complexity predominate over residues 160 to 174 (QDSSASDSESSGSPD).

It belongs to the NrdR family. Zn(2+) is required as a cofactor.

Its function is as follows. Negatively regulates transcription of bacterial ribonucleotide reductase nrd genes and operons by binding to NrdR-boxes. In Synechococcus sp. (strain JA-2-3B'a(2-13)) (Cyanobacteria bacterium Yellowstone B-Prime), this protein is Transcriptional repressor NrdR.